We begin with the raw amino-acid sequence, 52 residues long: DNA-directed RNA polymerase subunit Rpo12 (52 aa).

Zn(2+) is bound by residues Cys-13, Cys-30, and Cys-33.

The protein belongs to the archaeal Rpo12/eukaryotic RPC10 RNA polymerase subunit family. Part of the RNA polymerase complex. Zn(2+) is required as a cofactor.

The protein resides in the cytoplasm. It carries out the reaction RNA(n) + a ribonucleoside 5'-triphosphate = RNA(n+1) + diphosphate. Its function is as follows. DNA-dependent RNA polymerase (RNAP) catalyzes the transcription of DNA into RNA using the four ribonucleoside triphosphates as substrates. This Pyrobaculum neutrophilum (strain DSM 2338 / JCM 9278 / NBRC 100436 / V24Sta) (Thermoproteus neutrophilus) protein is DNA-directed RNA polymerase subunit Rpo12.